The primary structure comprises 322 residues: Aspartate carbamoyltransferase catalytic subunit (322 aa).

Arg70 and Thr71 together coordinate carbamoyl phosphate. An L-aspartate-binding site is contributed by Lys98. The carbamoyl phosphate site is built by Arg120, His150, and Gln153. Positions 184 and 239 each coordinate L-aspartate. Residues Gly280 and Pro281 each contribute to the carbamoyl phosphate site.

This sequence belongs to the aspartate/ornithine carbamoyltransferase superfamily. ATCase family. As to quaternary structure, heterododecamer (2C3:3R2) of six catalytic PyrB chains organized as two trimers (C3), and six regulatory PyrI chains organized as three dimers (R2).

The enzyme catalyses carbamoyl phosphate + L-aspartate = N-carbamoyl-L-aspartate + phosphate + H(+). Its pathway is pyrimidine metabolism; UMP biosynthesis via de novo pathway; (S)-dihydroorotate from bicarbonate: step 2/3. Functionally, catalyzes the condensation of carbamoyl phosphate and aspartate to form carbamoyl aspartate and inorganic phosphate, the committed step in the de novo pyrimidine nucleotide biosynthesis pathway. The sequence is that of Aspartate carbamoyltransferase catalytic subunit from Xylella fastidiosa (strain 9a5c).